The sequence spans 433 residues: Chaperone SurA (433 aa).

An N-terminal signal peptide occupies residues 1–24 (MKYRIKALLLASSLIITTITSVQA). PpiC domains follow at residues 175 to 276 (NVEY…KVLD) and 285 to 384 (VEEV…KLED).

It localises to the periplasm. It catalyses the reaction [protein]-peptidylproline (omega=180) = [protein]-peptidylproline (omega=0). Chaperone involved in the correct folding and assembly of outer membrane proteins. Recognizes specific patterns of aromatic residues and the orientation of their side chains, which are found more frequently in integral outer membrane proteins. May act in both early periplasmic and late outer membrane-associated steps of protein maturation. The chain is Chaperone SurA from Colwellia psychrerythraea (strain 34H / ATCC BAA-681) (Vibrio psychroerythus).